A 342-amino-acid chain; its full sequence is N-acetyl-gamma-glutamyl-phosphate reductase (342 aa).

Residue C149 is part of the active site.

It belongs to the NAGSA dehydrogenase family. Type 1 subfamily.

The protein localises to the cytoplasm. It carries out the reaction N-acetyl-L-glutamate 5-semialdehyde + phosphate + NADP(+) = N-acetyl-L-glutamyl 5-phosphate + NADPH + H(+). The protein operates within amino-acid biosynthesis; L-arginine biosynthesis; N(2)-acetyl-L-ornithine from L-glutamate: step 3/4. Functionally, catalyzes the NADPH-dependent reduction of N-acetyl-5-glutamyl phosphate to yield N-acetyl-L-glutamate 5-semialdehyde. The sequence is that of N-acetyl-gamma-glutamyl-phosphate reductase from Jannaschia sp. (strain CCS1).